We begin with the raw amino-acid sequence, 632 residues long: MTQAEREQENGKEKEKEREKEKEKEKEQRGIKRPIAPPVIPEPLQEQIQSNFIVVLHPGSKTLRIGRATDTLPATVPHVIARRHKQTCQTRYEDGWLVREGLNKPESNEQRQNGLKMVDQAIWSKKMSNGVRRTPVSAEQARSYNRLIRPAGLDTSSRMKWTNTAHHPEHLVGEEALYVNPTDCYNVHWPISRGQLNVHGGVGGSLTAVLADLEAIWSHVIQKQLEIPLKDLKYYRCILLVPDIYNRHHIKELVNMLLLNMGFSAIVVHQESVCATFGSGLSSACVVDVGDQKTSLCCVEDGVSHRNSRLCLAYGGADVTRCFFWLLQRAGFPYRECQLSNRVDCILLQQLKETFCHLDQDISGLQDHEFRTRFPESPALLYQVRLGDEKLQAPMALFYPTTFGIVGQKMTSLQHRSQGDPEDPHDEHYLLGTQSKQDQSSKASAERKSLPKPPGFEGELSSQGGDPSERGGGAHGQDVELGHSQNDCLMGGAEMEEPPSALLSRKTAMTQFEGKALGLDKAILHSIDCCASDETKRKMYSSILVVGGGLLFHRAQEFLQHRILNKMPPSFRRVVESVEVITRPKDMDPRLISWKGGAVLACLDTTQEMWIHQREWQRFGVRMLRERAAFVW.

Positions 1 to 30 (MTQAEREQENGKEKEKEREKEKEKEKEQRG) are enriched in basic and acidic residues. A disordered region spans residues 1-43 (MTQAEREQENGKEKEKEREKEKEKEKEQRGIKRPIAPPVIPEP). An ATP-binding site is contributed by 288-291 (DVGD). Disordered stretches follow at residues 410–429 (MTSL…DEHY) and 434–494 (QSKQ…GGAE). Low complexity predominate over residues 434-443 (QSKQDQSSKA).

Belongs to the actin family. ARP8 subfamily. In terms of assembly, component of the chromatin remodeling INO80 complex; specifically part of a complex module associated with the DBINO domain of INO80. Exists as monomers and dimers, but the dimer is most probably the biologically relevant form required for stable interactions with histones that exploits the twofold symmetry of the nucleosome core.

It is found in the nucleus. Its subcellular location is the chromosome. In terms of biological role, plays an important role in the functional organization of mitotic chromosomes. Exhibits low basal ATPase activity, and unable to polymerize. Functionally, proposed core component of the chromatin remodeling INO80 complex which is involved in transcriptional regulation, DNA replication and probably DNA repair. Required for the recruitment of INO80 (and probably the INO80 complex) to sites of DNA damage Strongly prefer nucleosomes and H3-H4 tetramers over H2A-H2B dimers, suggesting it may act as a nucleosome recognition module within the complex. In Salmo salar (Atlantic salmon), this protein is Actin-related protein 8 (actr8).